A 643-amino-acid polypeptide reads, in one-letter code: Protein disulfide-isomerase A4 (643 aa).

The N-terminal stretch at 1-20 (MKLRKAWLLVLLLALTQLLA) is a signal peptide. 2 consecutive Thioredoxin domains span residues 21–167 (AASA…EVSQ) and 167–299 (QPDW…EFLK). The tract at residues 24–58 (AEDAHEDASDSENPIEDDDDEEEDEEDEDDLEVKE) is disordered. Acidic residues predominate over residues 32–56 (SDSENPIEDDDDEEEDEEDEDDLEV). Residues 89-92 (CGHC) carry the CXXC motif. 2 disulfide bridges follow: Cys-89-Cys-92 and Cys-204-Cys-207. Lys-364 carries the post-translational modification N6-acetyllysine. In terms of domain architecture, Thioredoxin 3 spans 503 to 634 (FKKGKLKPVI…LSKFIDEHAT (132 aa)). The CXXC signature appears at 553-556 (CGHC). Cys-553 and Cys-556 are disulfide-bonded. The Prevents secretion from ER signature appears at 640–643 (KEEL).

This sequence belongs to the protein disulfide isomerase family. As to quaternary structure, part of a large chaperone multiprotein complex comprising DNAJB11, HSP90B1, HSPA5, HYOU, PDIA2, PDIA4, PDIA6, PPIB, SDF2L1, UGGT1 and very small amounts of ERP29, but not, or at very low levels, CALR nor CANX. Component of a complex containing at least CRELD2, MANF, MATN3 and PDIA4. O-glycosylated.

The protein localises to the endoplasmic reticulum lumen. It is found in the melanosome. It catalyses the reaction Catalyzes the rearrangement of -S-S- bonds in proteins.. The protein is Protein disulfide-isomerase A4 (Pdia4) of Rattus norvegicus (Rat).